The chain runs to 551 residues: Cleavage and polyadenylation specificity factor subunit 6 (551 aa).

Residues 81-161 (IALYIGNLTW…QNPVVTPCNK (81 aa)) form the RRM domain. Threonine 157 carries the post-translational modification Phosphothreonine. The span at 169–180 (MQSRKTTQSGQM) shows a compositional bias: polar residues. Disordered regions lie at residues 169-410 (MQSR…TPLS) and 477-551 (LHGI…YRHR). Pro residues-rich tracts occupy residues 237-265 (TRPPLGPPGPPGPPGPPPPGQVLPPPLAG), 285-366 (GQPP…PPPA), and 377-388 (GPPPTDPYGRPP). 2 stretches are compositionally biased toward basic and acidic residues: residues 389 to 404 (PYDRGDYGPPGREMDA) and 489 to 503 (SRRERSRERDHSRSR). Serine 494, serine 500, serine 511, serine 513, and serine 525 each carry phosphoserine. Basic residues predominate over residues 504–514 (EKSRRHKSRSR). The segment covering 515–551 (DRHDDYYRERSRERERHRDRDRDRDRERDREREYRHR) has biased composition (basic and acidic residues).

This sequence belongs to the RRM CPSF6/7 family. As to quaternary structure, component of the cleavage factor Im (CFIm) complex.

It is found in the nucleus. The protein resides in the nucleoplasm. Its subcellular location is the nucleus speckle. The protein localises to the cytoplasm. Functionally, component of the cleavage factor Im (CFIm) complex that functions as an activator of the pre-mRNA 3'-end cleavage and polyadenylation processing required for the maturation of pre-mRNA into functional mRNAs. CFIm contributes to the recruitment of multiprotein complexes on specific sequences on the pre-mRNA 3'-end, so called cleavage and polyadenylation signals (pA signals). Most pre-mRNAs contain multiple pA signals, resulting in alternative cleavage and polyadenylation (APA) producing mRNAs with variable 3'-end formation. The CFIm complex acts as a key regulator of cleavage and polyadenylation site choice during APA through its binding to 5'-UGUA-3' elements localized in the 3'-untranslated region (UTR) for a huge number of pre-mRNAs. Plays a role in mRNA export. In Gallus gallus (Chicken), this protein is Cleavage and polyadenylation specificity factor subunit 6.